The following is a 969-amino-acid chain: GATOR2 complex protein Wdr59 (969 aa).

The segment at 1–24 (MPPTETLRPGERGTAGGPGAGAPE) is disordered. WD repeat units follow at residues 127–167 (GHTR…KPAL), 172–211 (VCMSGATQVGFNRVSGNLLAAAHDGDLRIWDIRKGSCPTH), 215–255 (AHLN…RAEK), 258–303 (TTMS…DPIC), and 307–351 (GHTD…LKLC). T373 is subject to Phosphothreonine. The RWD domain occupies 435–538 (HEFSLLNTNM…RALVAAMKKK (104 aa)). A C4-type zinc finger spans residues 891–911 (ECRKCAKPKRTPKCEPCKRPV). The Zn(2+) site is built by C892, C895, C904, C907, C917, C928, H933, H936, H939, C950, C953, C955, and C957. The RING-type; atypical zinc-finger motif lies at 912–960 (LFCVLCRLPVKGAANACLACGHGGHIDHMMQWFEKHNVCATCGCKCLER).

Belongs to the WD repeat WDR59 family. In terms of assembly, component of the GATOR complex consisting of mio, Nup44A/Seh1, Im11, Nplr3, Nplr2, Wdr24, Wdr59 and Sec13. Within the GATOR complex, probable component of the GATOR2 subcomplex which is likely composed of mio, Nup44A/Seh1, Wdr24, Wdr59 and Sec13. The GATOR2 complex associates with unmet in the absence of S-adenosyl-L-methionine; the mio-Wdr24-Nup44A subcomplex is essential and sufficient for this interaction while Wdr59 and Sec13 are dispensable. This association acts as a nutrient sensor to inhibit mTORC1 signaling in the absence of methionine.

It is found in the lysosome membrane. Its function is as follows. A component of the GATOR complex, which functions as a regulator of the amino acid-sensing branch of the mTORC1 signaling pathway. The two GATOR subcomplexes, GATOR1 and GATOR2, regulate the mTORC1 pathway in order to mediate metabolic homeostasis, female gametogenesis and the response to amino acid limitation and complete starvation. GATOR2 activates the mTORC1 signaling pathway through the inhibition of the GATOR1 subcomplex, controlling the switch to cell proliferation and growth under nutrient replete conditions and during female oocyte development. Acts as an atypical component of the GATOR2 subcomplex, which can either promote or inhibit mTORC1 signaling, depending on tissues: inhibits mTORC1 activity by preventing the activity of GATOR2 in the ovary and the eye imaginal disk brain, while it promotes mTORC1 activity in the fat body. This Drosophila melanogaster (Fruit fly) protein is GATOR2 complex protein Wdr59.